A 149-amino-acid polypeptide reads, in one-letter code: uncharacterized protein (149 aa).

Disordered stretches follow at residues 24-74 (TSQG…NDLE) and 129-149 (AIQDDAGIPNPEMPKSAPRAP). Positions 28 to 42 (EDVKPEPKPEVDEKV) are enriched in basic and acidic residues. A coiled-coil region spans residues 102 to 131 (SELESLKEKVSSATSMEELREIMEEFRAIQ).

This is an uncharacterized protein from Archaeoglobus fulgidus (strain ATCC 49558 / DSM 4304 / JCM 9628 / NBRC 100126 / VC-16).